Consider the following 500-residue polypeptide: L-arabinose isomerase (500 aa).

Mn(2+) is bound by residues glutamate 306, glutamate 333, histidine 350, and histidine 450.

This sequence belongs to the arabinose isomerase family. Homohexamer. It depends on Mn(2+) as a cofactor.

It catalyses the reaction beta-L-arabinopyranose = L-ribulose. It functions in the pathway carbohydrate degradation; L-arabinose degradation via L-ribulose; D-xylulose 5-phosphate from L-arabinose (bacterial route): step 1/3. Its function is as follows. Catalyzes the conversion of L-arabinose to L-ribulose. The sequence is that of L-arabinose isomerase from Salmonella enteritidis PT4 (strain P125109).